A 306-amino-acid chain; its full sequence is Small ribosomal subunit protein uS2 (306 aa).

Residues 257 to 306 (EGDKKDETAAAAEVQTSAETEKVADAEKPAEAVAEAEAEAPAADADAEQA) are disordered. The span at 275–286 (ETEKVADAEKPA) shows a compositional bias: basic and acidic residues. Over residues 287-300 (EAVAEAEAEAPAAD) the composition is skewed to low complexity.

It belongs to the universal ribosomal protein uS2 family.

The chain is Small ribosomal subunit protein uS2 from Streptomyces griseus subsp. griseus (strain JCM 4626 / CBS 651.72 / NBRC 13350 / KCC S-0626 / ISP 5235).